The chain runs to 376 residues: Putative F-box protein At3g18330 (376 aa).

Residues 1–46 form the F-box domain; sequence MPMPNLPKELVEEILSFVPATYLKRLSATCKPWNRLIHNDKRFARK.

In Arabidopsis thaliana (Mouse-ear cress), this protein is Putative F-box protein At3g18330.